A 303-amino-acid polypeptide reads, in one-letter code: Probable cell division protein WhiA (303 aa).

The segment at residues 272–303 (SIQQIADSLAVPLTKSGVNHRLRKINKIAEDL) is a DNA-binding region (H-T-H motif).

The protein belongs to the WhiA family.

Involved in cell division and chromosome segregation. The polypeptide is Probable cell division protein WhiA (Streptococcus mutans serotype c (strain ATCC 700610 / UA159)).